A 323-amino-acid polypeptide reads, in one-letter code: Acetyl-coenzyme A carboxylase carboxyl transferase subunit alpha (323 aa).

Residues 39-293 (RLSKKSQQLT…RRALADSLRQ (255 aa)) enclose the CoA carboxyltransferase C-terminal domain.

Belongs to the AccA family. In terms of assembly, acetyl-CoA carboxylase is a heterohexamer composed of biotin carboxyl carrier protein (AccB), biotin carboxylase (AccC) and two subunits each of ACCase subunit alpha (AccA) and ACCase subunit beta (AccD).

It is found in the cytoplasm. The catalysed reaction is N(6)-carboxybiotinyl-L-lysyl-[protein] + acetyl-CoA = N(6)-biotinyl-L-lysyl-[protein] + malonyl-CoA. The protein operates within lipid metabolism; malonyl-CoA biosynthesis; malonyl-CoA from acetyl-CoA: step 1/1. Its function is as follows. Component of the acetyl coenzyme A carboxylase (ACC) complex. First, biotin carboxylase catalyzes the carboxylation of biotin on its carrier protein (BCCP) and then the CO(2) group is transferred by the carboxyltransferase to acetyl-CoA to form malonyl-CoA. The sequence is that of Acetyl-coenzyme A carboxylase carboxyl transferase subunit alpha from Burkholderia vietnamiensis (strain G4 / LMG 22486) (Burkholderia cepacia (strain R1808)).